The following is a 204-amino-acid chain: Large ribosomal subunit protein eL15z (204 aa).

The segment at 161–204 is disordered; the sequence is LRGLTSEGKKNRGLRGKGHNNHKNRPSRRATWKKNNSLSLRRYR. Positions 171–192 are enriched in basic residues; the sequence is NRGLRGKGHNNHKNRPSRRATW. Polar residues predominate over residues 193 to 204; that stretch reads KKNNSLSLRRYR.

This sequence belongs to the eukaryotic ribosomal protein eL15 family.

This Arabidopsis thaliana (Mouse-ear cress) protein is Large ribosomal subunit protein eL15z (RPL15A).